Here is a 231-residue protein sequence, read N- to C-terminus: Histone H1 (231 aa).

Residues 1 to 17 (MSDPAIEVAPVPVASPA) show a composition bias toward low complexity. Disordered stretches follow at residues 1–44 (MSDP…PVSD) and 124–231 (TKKV…AKKA). Positions 38 to 112 (THPPVSDMIV…GASGSFKLPA (75 aa)) constitute an H15 domain. 3 stretches are compositionally biased toward basic residues: residues 145–171 (KVKK…KTTK), 178–213 (PTKK…KAKK), and 221–231 (KAAKKPSAKKA).

This sequence belongs to the histone H1/H5 family.

It is found in the nucleus. The protein resides in the chromosome. In terms of biological role, histones H1 are necessary for the condensation of nucleosome chains into higher-order structures. This is Histone H1 from Chironomus thummi thummi (Midge).